Reading from the N-terminus, the 327-residue chain is 2-phosphoglycerate kinase (327 aa).

A compositionally biased stretch (basic and acidic residues) spans 1 to 20; sequence MSEKSSRKERDEKTEKETAR. The segment at 1-27 is disordered; that stretch reads MSEKSSRKERDEKTEKETARQGKHRRI. One can recognise an ATP-cone domain in the interval 25-111; it reads RRIRVKSRHY…LWRRIKKREE (87 aa).

Belongs to the 2-phosphoglycerate kinase family. It depends on a divalent metal cation as a cofactor.

The catalysed reaction is (2R)-2-phosphoglycerate + ATP = (2R)-2,3-bisphosphoglycerate + ADP + H(+). It functions in the pathway thermoadapter biosynthesis; cyclic 2,3-diphosphoglycerate biosynthesis; cyclic 2,3-diphosphoglycerate from 2-phospho-D-glycerate: step 1/2. In terms of biological role, catalyzes the phosphorylation of 2-phosphoglycerate to 2,3-diphosphoglycerate. Involved in the biosynthesis of cyclic 2,3-bisphosphoglycerate, a thermoprotectant. The polypeptide is 2-phosphoglycerate kinase (Methanopyrus kandleri (strain AV19 / DSM 6324 / JCM 9639 / NBRC 100938)).